The following is a 338-amino-acid chain: Lipoate-protein ligase A (338 aa).

Residues 29–216 (PATQRVLFLW…AFFAHYGERV (188 aa)) enclose the BPL/LPL catalytic domain. ATP is bound by residues arginine 71, 76-79 (GAVF), and lysine 134. (R)-lipoate is bound at residue lysine 134.

It belongs to the LplA family. In terms of assembly, monomer.

The protein localises to the cytoplasm. The enzyme catalyses L-lysyl-[lipoyl-carrier protein] + (R)-lipoate + ATP = N(6)-[(R)-lipoyl]-L-lysyl-[lipoyl-carrier protein] + AMP + diphosphate + H(+). Its pathway is protein modification; protein lipoylation via exogenous pathway; protein N(6)-(lipoyl)lysine from lipoate: step 1/2. The protein operates within protein modification; protein lipoylation via exogenous pathway; protein N(6)-(lipoyl)lysine from lipoate: step 2/2. Catalyzes both the ATP-dependent activation of exogenously supplied lipoate to lipoyl-AMP and the transfer of the activated lipoyl onto the lipoyl domains of lipoate-dependent enzymes. This Escherichia coli (strain K12 / MC4100 / BW2952) protein is Lipoate-protein ligase A.